Consider the following 65-residue polypeptide: MKTSKMICAFLLVLVVGTFNDISGAYGEYVEDQHSFKIERRFPPCVEVCVQHTGNVKECEAACGE.

A signal peptide spans 1 to 27; it reads MKTSKMICAFLLVLVVGTFNDISGAYG. Positions 28 to 39 are excised as a propeptide; the sequence is EYVEDQHSFKIE. 2 disulfide bridges follow: Cys45-Cys63 and Cys49-Cys59.

It belongs to the short scorpion toxin superfamily. Potassium channel inhibitor kappa-KTx family. Kappa-KTx 2 subfamily. As to expression, expressed by the venom gland.

It localises to the secreted. Its function is as follows. Potassium channel inhibitor (Kv). The chain is Potassium channel toxin kappa-KTx 2.6 from Opisthacanthus cayaporum (South American scorpion).